The sequence spans 262 residues: Hydroxyethylthiazole kinase (262 aa).

Met50 provides a ligand contact to substrate. ATP contacts are provided by Arg125 and Thr171. Gly198 lines the substrate pocket.

The protein belongs to the Thz kinase family. Mg(2+) is required as a cofactor.

It catalyses the reaction 5-(2-hydroxyethyl)-4-methylthiazole + ATP = 4-methyl-5-(2-phosphooxyethyl)-thiazole + ADP + H(+). It participates in cofactor biosynthesis; thiamine diphosphate biosynthesis; 4-methyl-5-(2-phosphoethyl)-thiazole from 5-(2-hydroxyethyl)-4-methylthiazole: step 1/1. In terms of biological role, catalyzes the phosphorylation of the hydroxyl group of 4-methyl-5-beta-hydroxyethylthiazole (THZ). This is Hydroxyethylthiazole kinase from Escherichia coli O17:K52:H18 (strain UMN026 / ExPEC).